The following is a 203-amino-acid chain: UDP-N-acetylglucosamine transferase subunit ALG13 (203 aa).

Belongs to the glycosyltransferase 28 family. In terms of assembly, heterodimer with ALG14 to form a functional enzyme.

It is found in the endoplasmic reticulum. It carries out the reaction an N-acetyl-alpha-D-glucosaminyl-diphospho-di-trans,poly-cis-dolichol + UDP-N-acetyl-alpha-D-glucosamine = an N,N'-diacetylchitobiosyl-diphospho-di-trans,poly-cis-dolichol + UDP + H(+). Functionally, involved in protein N-glycosylation. Essential for the second step of the dolichol-linked oligosaccharide pathway. The sequence is that of UDP-N-acetylglucosamine transferase subunit ALG13 (ALG13) from Eremothecium gossypii (strain ATCC 10895 / CBS 109.51 / FGSC 9923 / NRRL Y-1056) (Yeast).